The following is a 656-amino-acid chain: MFLERVNQKTGEREWVVAQEDYDMAQELARSRFGDMILDFDRNDKFLEGLKTTIPEKKKENGDGLVHVLDIANITFPGTGTGLLSLMAAREGADKVTALEVFKPMGDCARHITGCSPWAEKITVISERSTDVSQIGGTAADIIVAEVFDTELIGEGALRTFKEALQRLAKPGCRVVPSSGNVYIVPVESHLLKMFNTIPRINGGEDEHPLGTCSGTASVFDVQLSELETHEFRELAEPIVAFKFDFENEEKIIYNESFVREAIAHTSGTIDAIMMWWDIDMDGKGETFIDMAPRWKNPKHYAWRDHWMQAVYYLPDKKCVEKAQKFEIICNHDEFSIWFSDVGKDSTRSYCVCGLHSMLSRQTVYHINEMFEDQSFRAEVDRLSSGLNVVTVGEGSFVGLLAAKTAKTVTIIEPNERFRDIFHKYVLYYNMKNVHIVEKVTHLIEKPDIVIAEPFYMSAMNPWNHLRFLYDVEILKMLHGDDLKVEPHLGTLKAIPECFEDLHKIAADVNTVNGFDLSYFDRISTKARAATDAIVDEQSLWEYAGTVKGEPVELLTFPVDGRILSRKCVGKMDNMQSSNGIPIWMEWQFGDLTLSTGLLSTSESRKPCWNKGYKQGVYFPITNLQNESSINLNALFDKSSGDITFQFKKFDVQSGN.

2 consecutive SAM-dependent MTase PRMT-type domains span residues 12–338 (EREW…FSIW) and 343–656 (GKDS…QSGN).

The protein belongs to the class I-like SAM-binding methyltransferase superfamily. Protein arginine N-methyltransferase family. PRMT7 subfamily.

Its function is as follows. Arginine methyltransferase that can both catalyze the formation of omega-N monomethylarginine (MMA) and symmetrical dimethylarginine (sDMA). This is Protein arginine N-methyltransferase 7 (prmt-7) from Caenorhabditis briggsae.